A 128-amino-acid polypeptide reads, in one-letter code: Ribosome-binding factor A (128 aa).

The protein belongs to the RbfA family. In terms of assembly, monomer. Binds 30S ribosomal subunits, but not 50S ribosomal subunits or 70S ribosomes.

The protein localises to the cytoplasm. In terms of biological role, one of several proteins that assist in the late maturation steps of the functional core of the 30S ribosomal subunit. Associates with free 30S ribosomal subunits (but not with 30S subunits that are part of 70S ribosomes or polysomes). Required for efficient processing of 16S rRNA. May interact with the 5'-terminal helix region of 16S rRNA. The sequence is that of Ribosome-binding factor A from Microcystis aeruginosa (strain NIES-843 / IAM M-2473).